We begin with the raw amino-acid sequence, 1371 residues long: DNA-directed RNA polymerase subunit beta (1371 aa).

It belongs to the RNA polymerase beta chain family. As to quaternary structure, the RNAP catalytic core consists of 2 alpha, 1 beta, 1 beta' and 1 omega subunit. When a sigma factor is associated with the core the holoenzyme is formed, which can initiate transcription.

The catalysed reaction is RNA(n) + a ribonucleoside 5'-triphosphate = RNA(n+1) + diphosphate. Its function is as follows. DNA-dependent RNA polymerase catalyzes the transcription of DNA into RNA using the four ribonucleoside triphosphates as substrates. The protein is DNA-directed RNA polymerase subunit beta of Geobacter sp. (strain M21).